Consider the following 160-residue polypeptide: Dihydrofolate reductase (160 aa).

A DHFR domain is found at 1–160 (MVKAIWAMDQ…KVAYYHKIAR (160 aa)). A substrate-binding site is contributed by 5–7 (IWA). NADP(+) contacts are provided by residues 6–7 (WA) and 14–19 (IGNGNS). Glu27 and Arg32 together coordinate substrate. 43–46 (GSAT) provides a ligand contact to NADP(+). Arg57 contributes to the substrate binding site. NADP(+)-binding positions include 62 to 65 (LTRN) and 101 to 106 (CGGAQV). Ser120 provides a ligand contact to substrate.

This sequence belongs to the dihydrofolate reductase family.

The catalysed reaction is (6S)-5,6,7,8-tetrahydrofolate + NADP(+) = 7,8-dihydrofolate + NADPH + H(+). The protein operates within cofactor biosynthesis; tetrahydrofolate biosynthesis; 5,6,7,8-tetrahydrofolate from 7,8-dihydrofolate: step 1/1. Its function is as follows. Key enzyme in folate metabolism. Catalyzes an essential reaction for de novo glycine and purine synthesis, and for DNA precursor synthesis. In Mycoplasma pneumoniae (strain ATCC 29342 / M129 / Subtype 1) (Mycoplasmoides pneumoniae), this protein is Dihydrofolate reductase (folA).